The following is a 160-amino-acid chain: MGVTKKPDLNDPVLRAKLAKGMGHNYYGEPAWPNDLLYIFPVVILGTIACNVGLAVLEPSMIGEPADPFATPLEILPEWYFFPVFQILRTVPNKLLGVLLMVSVPTGLLTVPFLENVNKFQNPFRRPVATTVFLIGTVVALWLGIGATLPIDKSLTLGLF.

Transmembrane regions (helical) follow at residues 36–56 (LLYI…GLAV), 95–115 (LLGV…PFLE), and 131–151 (TVFL…TLPI).

It belongs to the cytochrome b family. PetD subfamily. The 4 large subunits of the cytochrome b6-f complex are cytochrome b6, subunit IV (17 kDa polypeptide, petD), cytochrome f and the Rieske protein, while the 4 small subunits are petG, petL, petM and petN. The complex functions as a dimer.

The protein localises to the plastid. It is found in the chloroplast thylakoid membrane. Functionally, component of the cytochrome b6-f complex, which mediates electron transfer between photosystem II (PSII) and photosystem I (PSI), cyclic electron flow around PSI, and state transitions. This Sorghum bicolor (Sorghum) protein is Cytochrome b6-f complex subunit 4.